We begin with the raw amino-acid sequence, 85 residues long: Large ribosomal subunit protein bL31B (85 aa).

Belongs to the bacterial ribosomal protein bL31 family. Type B subfamily. In terms of assembly, part of the 50S ribosomal subunit.

This Pseudomonas entomophila (strain L48) protein is Large ribosomal subunit protein bL31B.